The following is a 254-amino-acid chain: Undecaprenyl-diphosphatase 3 (254 aa).

8 helical membrane passes run 8 to 28, 33 to 53, 74 to 94, 97 to 117, 133 to 153, 174 to 194, 207 to 227, and 233 to 253; these read TEFLPVSSTGHMILTGHLIGF, AKVFEVVIQLGSILAVVVIFW, LHIIIGMIPAGVLGVLFHSAI, VLFGPGPVVISLVAGGILMIV, ITYKQAFTIGMFQCLALWPGF, AEYTFILAVPMMVAASGLDLI, LFATGFITAFVVAMLAIVSFL, and VKLTPFAYYRFILAAVFYFFI.

It belongs to the UppP family.

Its subcellular location is the cell membrane. It catalyses the reaction di-trans,octa-cis-undecaprenyl diphosphate + H2O = di-trans,octa-cis-undecaprenyl phosphate + phosphate + H(+). In terms of biological role, catalyzes the dephosphorylation of undecaprenyl diphosphate (UPP). Confers resistance to bacitracin. This Bacillus thuringiensis (strain Al Hakam) protein is Undecaprenyl-diphosphatase 3.